A 126-amino-acid polypeptide reads, in one-letter code: Small ribosomal subunit protein bS6 (126 aa).

Residues 99 to 126 (PLPAPRVVPGTEAPEPAQAAETPEPEAS) form a disordered region. Positions 107-120 (PGTEAPEPAQAAET) are enriched in low complexity.

The protein belongs to the bacterial ribosomal protein bS6 family.

Functionally, binds together with bS18 to 16S ribosomal RNA. This Synechococcus sp. (strain CC9902) protein is Small ribosomal subunit protein bS6.